We begin with the raw amino-acid sequence, 129 residues long: MREKSFQCNESGKAFNCSSLLKKCQIIHLGEKKYKCDICGKVFNQKRYLAYHHRCHTGEKPYKCNQCGKTFSYKSSLVIHKAIHTGEKPHKCNECGKVFNQKAYLASHHRLHTGEKPYKCEECDKVFSR.

C2H2-type zinc fingers lie at residues 34-56 (YKCDICGKVFNQKRYLAYHHRCH), 62-84 (YKCNQCGKTFSYKSSLVIHKAIH), and 90-112 (HKCNECGKVFNQKAYLASHHRLH).

It belongs to the krueppel C2H2-type zinc-finger protein family.

It localises to the nucleus. Its function is as follows. May be involved in transcriptional regulation. The chain is Putative zinc finger protein 702 (ZNF702P) from Homo sapiens (Human).